The primary structure comprises 201 residues: Protein CD300H (201 aa).

The N-terminal stretch at 1–24 (MTQRAGAAMLPSALLLLCVPGCLT) is a signal peptide. Positions 25–123 (VSGPSTVMGA…ATILQEDGLS (99 aa)) constitute an Ig-like V-type domain. Topologically, residues 25-168 (VSGPSTVMGA…CQGSLPSSTC (144 aa)) are extracellular. Cys-43 and Cys-111 form a disulfide bridge. An N-linked (GlcNAc...) asparagine glycan is attached at Asn-100. The helical transmembrane segment at 169-189 (FLLLPLLKVPLLLSILGAILW) threads the bilayer. Residues 190 to 201 (VNRPWRTPWTES) lie on the Cytoplasmic side of the membrane.

It belongs to the CD300 family. In terms of assembly, interacts with TYROBP and HCST. Expressed on CD16+ monocytes and myeloid dendritic cells (at protein level). By contrast, not detected in lymphocytes nor granulocytes (at protein level).

It is found in the membrane. Its subcellular location is the secreted. In terms of biological role, may play an important role in innate immunity by mediating a signal for the production of a neutrophil chemoattractant. The protein is Protein CD300H of Homo sapiens (Human).